The chain runs to 275 residues: Myb/SANT-like DNA-binding domain-containing protein 3 (275 aa).

Residues 13-78 (FSELEKSILL…QLKKCWENIK (66 aa)) form the Myb-like domain. Ser96 and Ser98 each carry phosphoserine. Lys154 is covalently cross-linked (Glycyl lysine isopeptide (Lys-Gly) (interchain with G-Cter in SUMO2)). Positions 211–247 (QLIQMNEVHVAKIQQIERECEMAEEEHRIKMEVLNKK) form a coiled coil. A Phosphoserine modification is found at Ser274.

This sequence belongs to the MSANTD3 family. Expressed in brain.

This Homo sapiens (Human) protein is Myb/SANT-like DNA-binding domain-containing protein 3 (MSANTD3).